Here is a 179-residue protein sequence, read N- to C-terminus: Large ribosomal subunit protein uL5 (179 aa).

Belongs to the universal ribosomal protein uL5 family. Part of the 50S ribosomal subunit; part of the 5S rRNA/L5/L18/L25 subcomplex. Contacts the 5S rRNA and the P site tRNA. Forms a bridge to the 30S subunit in the 70S ribosome.

This is one of the proteins that bind and probably mediate the attachment of the 5S RNA into the large ribosomal subunit, where it forms part of the central protuberance. In the 70S ribosome it contacts protein S13 of the 30S subunit (bridge B1b), connecting the 2 subunits; this bridge is implicated in subunit movement. Contacts the P site tRNA; the 5S rRNA and some of its associated proteins might help stabilize positioning of ribosome-bound tRNAs. The sequence is that of Large ribosomal subunit protein uL5 from Pseudomonas putida (strain W619).